Reading from the N-terminus, the 356-residue chain is Neutral protease 2 homolog MEP5 (356 aa).

The signal sequence occupies residues 1 to 19 (MRVSSSLIALAALAVQALA). Positions 20 to 179 (LPVNELAERD…ASAIPELDKR (160 aa)) are excised as a propeptide. 2 disulfides stabilise this stretch: cysteine 187-cysteine 259 and cysteine 266-cysteine 284. Histidine 308 lines the Zn(2+) pocket. Glutamate 309 is an active-site residue. Residues histidine 312 and aspartate 323 each coordinate Zn(2+).

Belongs to the peptidase M35 family. Zn(2+) is required as a cofactor.

It localises to the secreted. It catalyses the reaction Preferential cleavage of bonds with hydrophobic residues in P1'. Also 3-Asn-|-Gln-4 and 8-Gly-|-Ser-9 bonds in insulin B chain.. Functionally, secreted metalloproteinase that allows assimilation of proteinaceous substrates. Shows high activities on basic nuclear substrates such as histone and protamine. May be involved in virulence. In Coccidioides posadasii (strain C735) (Valley fever fungus), this protein is Neutral protease 2 homolog MEP5 (MEP5).